A 324-amino-acid polypeptide reads, in one-letter code: UDP-N-acetylenolpyruvoylglucosamine reductase (324 aa).

The 168-residue stretch at 36–203 (FRAGGLAELM…TSVLFEGYPE (168 aa)) folds into the FAD-binding PCMH-type domain. Arg-183 is an active-site residue. Ser-232 (proton donor) is an active-site residue. Residue Glu-302 is part of the active site.

The protein belongs to the MurB family. Requires FAD as cofactor.

Its subcellular location is the cytoplasm. It catalyses the reaction UDP-N-acetyl-alpha-D-muramate + NADP(+) = UDP-N-acetyl-3-O-(1-carboxyvinyl)-alpha-D-glucosamine + NADPH + H(+). It participates in cell wall biogenesis; peptidoglycan biosynthesis. Functionally, cell wall formation. This Rhizobium johnstonii (strain DSM 114642 / LMG 32736 / 3841) (Rhizobium leguminosarum bv. viciae) protein is UDP-N-acetylenolpyruvoylglucosamine reductase.